The sequence spans 254 residues: 5'-nucleotidase SurE (254 aa).

Positions 8, 9, 40, and 93 each coordinate a divalent metal cation.

Belongs to the SurE nucleotidase family. Requires a divalent metal cation as cofactor.

It is found in the cytoplasm. It carries out the reaction a ribonucleoside 5'-phosphate + H2O = a ribonucleoside + phosphate. Its function is as follows. Nucleotidase that shows phosphatase activity on nucleoside 5'-monophosphates. This Methylorubrum populi (strain ATCC BAA-705 / NCIMB 13946 / BJ001) (Methylobacterium populi) protein is 5'-nucleotidase SurE.